We begin with the raw amino-acid sequence, 1491 residues long: CLIP-associating protein (1491 aa).

HEAT repeat units follow at residues 44-82 (CTDM…RLGS), 85-123 (NAYT…HRVL), 163-201 (QLSV…HVGD), and 402-440 (DAFC…YTHA). 2 disordered regions span residues 537 to 586 (RERE…AVDT) and 600 to 739 (LYSR…NNPV). The span at 542–551 (GGGGGTGTGT) shows a compositional bias: gly residues. Residues 569–580 (GTLQKPTPSMRS) are compositionally biased toward polar residues. Residues serine 582, serine 626, and serine 634 each carry the phosphoserine modification. Positions 632–646 (LNSNSGGTPATTPGS) are enriched in polar residues. Threonine 648 bears the Phosphothreonine mark. 2 stretches are compositionally biased toward polar residues: residues 657 to 671 (VSQS…SPST) and 699 to 712 (PRST…SPTR). Residues serine 806, serine 817, serine 820, serine 822, and serine 824 each carry the phosphoserine modification. HEAT repeat units follow at residues 874–912 (QQQL…VHAN) and 955–993 (QLQL…TYCK). Disordered stretches follow at residues 1065 to 1127 (HMRR…SVEQ) and 1167 to 1205 (GHLQ…ESAT). 3 stretches are compositionally biased toward low complexity: residues 1070-1097 (SQSC…QSPS), 1111-1124 (LSIS…RQSS), and 1181-1200 (ASLS…QSNT). Phosphoserine occurs at positions 1120, 1123, and 1124. 2 HEAT repeats span residues 1289-1327 (NKHF…SNKM) and 1408-1446 (DAHL…VLGE).

This sequence belongs to the CLASP family. In terms of assembly, interacts with CLIP-190 and microtubules. In terms of tissue distribution, expressed in testis and ovary.

It is found in the cytoplasm. Its subcellular location is the cytoskeleton. The protein localises to the nucleus. It localises to the microtubule organizing center. The protein resides in the centrosome. It is found in the spindle. Its subcellular location is the cell projection. The protein localises to the growth cone. It localises to the cleavage furrow. Its function is as follows. Microtubule plus-end tracking protein that promotes the stabilization of dynamic microtubules. Required for several aspects of mitotic spindle formation including the formation of the overlapping central spindle microtubules and kinetochore attachment. Required for the incorporation of tubulin subunits at the plus ends of kinetochore microtubules during poleward microtubule flux. Acts antagonistically to Klp10A and Klp67A to maintain metaphase spindle length. Also required for guidance of CNS axons downstream of Abl. May function to identify a subset of microtubules that probe the peripheral growth cone domain, where guidance signals exert their influence on cytoskeletal organization. Also required during oogenesis for the organization of the polarized microtubule network inside the 16-cell cyst that ensures oocyte differentiation. This Drosophila melanogaster (Fruit fly) protein is CLIP-associating protein (chb).